Here is a 192-residue protein sequence, read N- to C-terminus: Adenine phosphoribosyltransferase 2 (192 aa).

It belongs to the purine/pyrimidine phosphoribosyltransferase family. Homodimer.

The protein resides in the cytoplasm. It carries out the reaction AMP + diphosphate = 5-phospho-alpha-D-ribose 1-diphosphate + adenine. It functions in the pathway purine metabolism; AMP biosynthesis via salvage pathway; AMP from adenine: step 1/1. Functionally, catalyzes a salvage reaction resulting in the formation of AMP, that is energically less costly than de novo synthesis. May contribute to the recycling of adenine into adenylate nucleotides and the inactivation of cytokinins by phosphoribosylation. Possesses low activity toward adenine and cytokinins. The protein is Adenine phosphoribosyltransferase 2 (APT2) of Arabidopsis thaliana (Mouse-ear cress).